The sequence spans 254 residues: Bidirectional sugar transporter SWEET6b (254 aa).

Over 1–9 (MISPDAARN) the chain is Extracellular. A helical transmembrane segment spans residues 10–30 (VVGIIGNVISFGLFLAPVPTF). One can recognise a MtN3/slv 1 domain in the interval 10–98 (VVGIIGNVIS…IFFLYSPNKK (89 aa)). Over 31 to 45 (WRICKRKDVEEFKAD) the chain is Cytoplasmic. Residues 46–66 (PYLATLLNCMLWVFYGIPIVH) form a helical membrane-spanning segment. Residues 67–69 (PNS) are Extracellular-facing. Residues 70 to 90 (ILVVTINGIGLVVEGTYLFIF) form a helical membrane-spanning segment. At 91–101 (FLYSPNKKRLR) the chain is on the cytoplasmic side. The helical transmembrane segment at 102 to 122 (MLAVLGVELVFMLAVILGVLL) threads the bilayer. Topologically, residues 123 to 131 (GAHTHKKRS) are extracellular. A helical transmembrane segment spans residues 132–152 (MIVGILCVFFGSIMYFSPLTI). A MtN3/slv 2 domain is found at 133 to 216 (IVGILCVFFG…LILYACYYRT (84 aa)). The Cytoplasmic segment spans residues 153–165 (MGKVIKTKSVEYM). A helical transmembrane segment spans residues 166–186 (PFFLSLVCFLNGVCWTAYALI). Residues 187–189 (RFD) are Extracellular-facing. A helical transmembrane segment spans residues 190–210 (IYVTIPNSLGAIFGAIQLILY). At 211-254 (ACYYRTTPKKTKAAKDVEMPSVISGPGAAATASGGSVVSVTVER) the chain is on the cytoplasmic side.

Belongs to the SWEET sugar transporter family. In terms of assembly, forms homooligomers and/or heterooligomers.

It is found in the cell membrane. Functionally, mediates both low-affinity uptake and efflux of sugar across the plasma membrane. The chain is Bidirectional sugar transporter SWEET6b (SWEET6B) from Oryza sativa subsp. indica (Rice).